We begin with the raw amino-acid sequence, 204 residues long: FMN-dependent NADH:quinone oxidoreductase 2 (204 aa).

FMN-binding positions include Ser-10 and 16–18 (SIS).

This sequence belongs to the azoreductase type 1 family. Homodimer. The cofactor is FMN.

The catalysed reaction is 2 a quinone + NADH + H(+) = 2 a 1,4-benzosemiquinone + NAD(+). It carries out the reaction N,N-dimethyl-1,4-phenylenediamine + anthranilate + 2 NAD(+) = 2-(4-dimethylaminophenyl)diazenylbenzoate + 2 NADH + 2 H(+). Quinone reductase that provides resistance to thiol-specific stress caused by electrophilic quinones. Its function is as follows. Also exhibits azoreductase activity. Catalyzes the reductive cleavage of the azo bond in aromatic azo compounds to the corresponding amines. This is FMN-dependent NADH:quinone oxidoreductase 2 from Jannaschia sp. (strain CCS1).